We begin with the raw amino-acid sequence, 298 residues long: GTPase Era (298 aa).

In terms of domain architecture, Era-type G spans 8–176 (RCGRIAVIGR…VSDLLALLPE (169 aa)). Residues 16 to 23 (GRPNVGKS) are G1. 16–23 (GRPNVGKS) is a binding site for GTP. The interval 42–46 (QTTRH) is G2. Residues 63–66 (DTPG) form a G3 region. Residues 63 to 67 (DTPGL) and 125 to 128 (NKID) each bind GTP. The tract at residues 125 to 128 (NKID) is G4. Residues 155–157 (VSA) are G5. A KH type-2 domain is found at 199–283 (VREQVMRQLG…FLETWVRVRK (85 aa)).

Belongs to the TRAFAC class TrmE-Era-EngA-EngB-Septin-like GTPase superfamily. Era GTPase family. In terms of assembly, monomer.

It localises to the cytoplasm. The protein resides in the cell inner membrane. Functionally, an essential GTPase that binds both GDP and GTP, with rapid nucleotide exchange. Plays a role in 16S rRNA processing and 30S ribosomal subunit biogenesis and possibly also in cell cycle regulation and energy metabolism. In Xylella fastidiosa (strain Temecula1 / ATCC 700964), this protein is GTPase Era.